A 249-amino-acid chain; its full sequence is MADS-box transcription factor 18 (249 aa).

The region spanning 1–61 (MGRGPVQLRR…GKLYEFSSHS (61 aa)) is the MADS-box domain. A K-box domain is found at 88–179 (QENWGDEYGI…KLMETEKEKN (92 aa)). A disordered region spans residues 184–249 (NTNREEQNGA…PPWMLRTSHT (66 aa)). Polar residues predominate over residues 210-236 (PTTNNSQSQPRGSGESEAQPSPAQAGN).

In terms of tissue distribution, widely expressed. Transcripts accumulate to higher levels in organs that retain meristematic characteristics: in the apical meristem and in the meristematic leaf primordia formed on its flank; in the developing panicle at the early stage of rachis-branch primordia differentiation; in the procambium of the rachis branches and in all floral organ primordia.

The protein localises to the nucleus. Probable transcription factor. The chain is MADS-box transcription factor 18 (MADS18) from Oryza sativa subsp. indica (Rice).